A 2164-amino-acid polypeptide reads, in one-letter code: Genome polyprotein (2164 aa).

A lipid anchor (N-myristoyl glycine; by host) is attached at G2. Topologically, residues 2–1477 (GAQVSRQNVG…DLGIANMTIG (1476 aa)) are cytoplasmic. The tract at residues 208-239 (NVSVGYNHTHPGEQGREVVPSRTSSDNKRPSD) is disordered. The interval 572-588 (LTQNPVENYIDSVLNEV) is amphipathic alpha-helix. Catalysis depends on for protease 2A activity residues H884 and D901. Residues C918 and C920 each coordinate Zn(2+). The active-site For protease 2A activity is the C972. Positions 978 and 980 each coordinate Zn(2+). A membrane-binding region spans residues 1104 to 1173 (SDSWLKKFTE…TIRLAPASVQ (70 aa)). The oligomerization stretch occupies residues 1104–1237 (SDSWLKKFTE…SPGTGKSLAT (134 aa)). Residues 1125 to 1129 (GQKIS) are RNA-binding. Residues 1197–1357 (EARRIKNLYI…KEYLLDGKLD (161 aa)) enclose the SF3 helicase domain. Residue 1227–1234 (GSPGTGKS) participates in ATP binding. C1365, C1376, and C1381 together coordinate Zn(2+). Residues 1365-1381 (CDVNIKIGNAKCCPFIC) form a C4-type; degenerate zinc finger. The RNA-binding stretch occupies residues 1408 to 1415 (EDRRRSSA). Residues 1419-1424 (MEAIFQ) form an oligomerization region. The stretch at 1478–1493 (IIANVVSIVGVIYIIY) is an intramembrane region. At 1494-2164 (KLFCTLQGPY…VLEHEWYEKF (671 aa)) the chain is on the cytoplasmic side. Y1503 carries the O-(5'-phospho-RNA)-tyrosine modification. Positions 1522–1700 (GPEEEFGRSL…FSAMLLKSYF (179 aa)) constitute a Peptidase C3 domain. Catalysis depends on for protease 3C activity residues H1561, E1592, and C1668. Positions 1932-2045 (ECLMAFDYSN…SYNFKLDMAV (114 aa)) constitute a RdRp catalytic domain. Mg(2+)-binding residues include D1938 and D2031.

The protein belongs to the picornaviruses polyprotein family. In terms of assembly, interacts with capsid protein VP1 and capsid protein VP3 to form heterotrimeric protomers. Interacts with capsid protein VP0, and capsid protein VP3 to form heterotrimeric protomers. Five protomers subsequently associate to form pentamers which serve as building blocks for the capsid. Interacts with capsid protein VP2, capsid protein VP3 and capsid protein VP4 following cleavage of capsid protein VP0. As to quaternary structure, interacts with capsid protein VP1 and capsid protein VP3 in the mature capsid. In terms of assembly, interacts with capsid protein VP0 and capsid protein VP1 to form heterotrimeric protomers. Five protomers subsequently associate to form pentamers which serve as building blocks for the capsid. Interacts with capsid protein VP4 in the mature capsid. Interacts with protein 2C; this interaction may be important for virion morphogenesis. Interacts with capsid protein VP1 and capsid protein VP3. As to quaternary structure, homodimer. In terms of assembly, homohexamer; forms a hexameric ring structure with 6-fold symmetry characteristic of AAA+ ATPases. Interacts (via N-terminus) with host RTN3 (via reticulon domain); this interaction is important for viral replication. Interacts with capsid protein VP3; this interaction may be important for virion morphogenesis. Interacts with protein 3CD. As to quaternary structure, homodimer. Interacts with host GBF1. Interacts (via GOLD domain) with host ACBD3 (via GOLD domain); this interaction allows the formation of a viral protein 3A/ACBD3 heterotetramer with a 2:2 stoichiometry, which will stimulate the recruitment of host PI4KB in order to synthesize PI4P at the viral RNA replication sites. In terms of assembly, interacts with RNA-directed RNA polymerase. Interacts with protein 3AB and with RNA-directed RNA polymerase. As to quaternary structure, interacts with Viral protein genome-linked and with protein 3CD. It depends on Mg(2+) as a cofactor. In terms of processing, specific enzymatic cleavages in vivo by the viral proteases yield processing intermediates and the mature proteins. Myristoylation is required for the formation of pentamers during virus assembly. Further assembly of 12 pentamers and a molecule of genomic RNA generates the provirion. Post-translationally, during virion maturation, immature virions are rendered infectious following cleavage of VP0 into VP4 and VP2. This maturation seems to be an autocatalytic event triggered by the presence of RNA in the capsid and it is followed by a conformational change infectious virion. In terms of processing, myristoylation is required during RNA encapsidation and formation of the mature virus particle. VPg is uridylylated by the polymerase into VPg-pUpU. This acts as a nucleotide-peptide primer for the genomic RNA replication.

Its subcellular location is the virion. The protein resides in the host cytoplasm. It localises to the host cytoplasmic vesicle membrane. The protein localises to the host nucleus. The catalysed reaction is a ribonucleoside 5'-triphosphate + H2O = a ribonucleoside 5'-diphosphate + phosphate + H(+). The enzyme catalyses Selective cleavage of Tyr-|-Gly bond in the picornavirus polyprotein.. It catalyses the reaction RNA(n) + a ribonucleoside 5'-triphosphate = RNA(n+1) + diphosphate. It carries out the reaction Selective cleavage of Gln-|-Gly bond in the poliovirus polyprotein. In other picornavirus reactions Glu may be substituted for Gln, and Ser or Thr for Gly.. With respect to regulation, replication or transcription is subject to high level of random mutations by the nucleotide analog ribavirin. Its function is as follows. Forms an icosahedral capsid of pseudo T=3 symmetry with capsid proteins VP2 and VP3. The capsid is 300 Angstroms in diameter, composed of 60 copies of each capsid protein and enclosing the viral positive strand RNA genome. Capsid protein VP1 mainly forms the vertices of the capsid. Capsid protein VP1 interacts with host cell receptor to provide virion attachment to target host cells. This attachment induces virion internalization. Tyrosine kinases are probably involved in the entry process. After binding to its receptor, the capsid undergoes conformational changes. Capsid protein VP1 N-terminus (that contains an amphipathic alpha-helix) and capsid protein VP4 are externalized. Together, they shape a pore in the host membrane through which viral genome is translocated to host cell cytoplasm. Forms an icosahedral capsid of pseudo T=3 symmetry with capsid proteins VP2 and VP3. The capsid is 300 Angstroms in diameter, composed of 60 copies of each capsid protein and enclosing the viral positive strand RNA genome. Functionally, lies on the inner surface of the capsid shell. After binding to the host receptor, the capsid undergoes conformational changes. Capsid protein VP4 is released, Capsid protein VP1 N-terminus is externalized, and together, they shape a pore in the host membrane through which the viral genome is translocated into the host cell cytoplasm. In terms of biological role, component of immature procapsids, which is cleaved into capsid proteins VP4 and VP2 after maturation. Allows the capsid to remain inactive before the maturation step. Its function is as follows. Cysteine protease that cleaves viral polyprotein and specific host proteins. It is responsible for the autocatalytic cleavage between the P1 and P2 regions, which is the first cleavage occurring in the polyprotein. Also cleaves the host translation initiation factor EIF4G1, in order to shut down the capped cellular mRNA translation. Inhibits the host nucleus-cytoplasm protein and RNA trafficking by cleaving host members of the nuclear pores. Counteracts stress granule formation probably by antagonizing its assembly or promoting its dissassembly. Plays an essential role in the virus replication cycle by acting as a viroporin. Creates a pore in the host endoplasmic reticulum and as a consequence releases Ca2+ in the cytoplasm of infected cell. In turn, high levels of cytoplasmic calcium may trigger membrane trafficking and transport of viral ER-associated proteins to viroplasms, sites of viral genome replication. Functionally, induces and associates with structural rearrangements of intracellular membranes. Displays RNA-binding, nucleotide binding and NTPase activities. May play a role in virion morphogenesis and viral RNA encapsidation by interacting with the capsid protein VP3. In terms of biological role, localizes the viral replication complex to the surface of membranous vesicles. Together with protein 3CD binds the Cis-Active RNA Element (CRE) which is involved in RNA synthesis initiation. Acts as a cofactor to stimulate the activity of 3D polymerase, maybe through a nucleid acid chaperone activity. Its function is as follows. Localizes the viral replication complex to the surface of membranous vesicles. It inhibits host cell endoplasmic reticulum-to-Golgi apparatus transport and causes the disassembly of the Golgi complex, possibly through GBF1 interaction. This would result in depletion of MHC, trail receptors and IFN receptors at the host cell surface. Plays an essential role in viral RNA replication by recruiting ACBD3 and PI4KB at the viral replication sites, thereby allowing the formation of the rearranged membranous structures where viral replication takes place. Acts as a primer for viral RNA replication and remains covalently bound to viral genomic RNA. VPg is uridylylated prior to priming replication into VPg-pUpU. The oriI viral genomic sequence may act as a template for this. The VPg-pUpU is then used as primer on the genomic RNA poly(A) by the RNA-dependent RNA polymerase to replicate the viral genome. During genome replication, the VPg-RNA linkage is removed by the host TDP2, thereby accelerating replication. During the late stage of the replication cycle, host TDP2 is excluded from sites of viral RNA synthesis and encapsidation, allowing for the generation of progeny virions. Functionally, involved in the viral replication complex and viral polypeptide maturation. It exhibits protease activity with a specificity and catalytic efficiency that is different from protease 3C. Protein 3CD lacks polymerase activity. Protein 3CD binds to the 5'UTR of the viral genome. In terms of biological role, replicates the viral genomic RNA on the surface of intracellular membranes. May form linear arrays of subunits that propagate along a strong head-to-tail interaction called interface-I. Covalently attaches UMP to a tyrosine of VPg, which is used to prime RNA synthesis. The positive stranded RNA genome is first replicated at virus induced membranous vesicles, creating a dsRNA genomic replication form. This dsRNA is then used as template to synthesize positive stranded RNA genomes. ss(+)RNA genomes are either translated, replicated or encapsidated. Its function is as follows. Major viral protease that mediates proteolytic processing of the polyprotein. Cleaves host EIF5B, contributing to host translation shutoff. Also cleaves host PABPC1, contributing to host translation shutoff. Cleaves host NLRP1, triggers host N-glycine-mediated degradation of the autoinhibitory NLRP1 N-terminal fragment. This is Genome polyprotein from Human rhinovirus A serotype 89 (strain 41467-Gallo) (HRV-89).